We begin with the raw amino-acid sequence, 67 residues long: Large ribosomal subunit protein bL35 (67 aa).

Residues 1–16 (MPKMKTKSSAKKRFRV) are compositionally biased toward basic residues. The interval 1 to 24 (MPKMKTKSSAKKRFRVRPGGTVKR) is disordered.

It belongs to the bacterial ribosomal protein bL35 family.

The protein is Large ribosomal subunit protein bL35 of Paracidovorax citrulli (strain AAC00-1) (Acidovorax citrulli).